A 270-amino-acid polypeptide reads, in one-letter code: 4-hydroxy-tetrahydrodipicolinate reductase (270 aa).

Residues 9 to 14 and Glu35 each bind NAD(+); that span reads GAGGRM. Arg36 contributes to the NADP(+) binding site. NAD(+) is bound by residues 99–101 and 123–126; these read GTT and ASNY. Catalysis depends on His156, which acts as the Proton donor/acceptor. His157 serves as a coordination point for (S)-2,3,4,5-tetrahydrodipicolinate. Residue Lys160 is the Proton donor of the active site. 166–167 is a binding site for (S)-2,3,4,5-tetrahydrodipicolinate; it reads GT.

Belongs to the DapB family.

The protein localises to the cytoplasm. It catalyses the reaction (S)-2,3,4,5-tetrahydrodipicolinate + NAD(+) + H2O = (2S,4S)-4-hydroxy-2,3,4,5-tetrahydrodipicolinate + NADH + H(+). The catalysed reaction is (S)-2,3,4,5-tetrahydrodipicolinate + NADP(+) + H2O = (2S,4S)-4-hydroxy-2,3,4,5-tetrahydrodipicolinate + NADPH + H(+). It participates in amino-acid biosynthesis; L-lysine biosynthesis via DAP pathway; (S)-tetrahydrodipicolinate from L-aspartate: step 4/4. Its function is as follows. Catalyzes the conversion of 4-hydroxy-tetrahydrodipicolinate (HTPA) to tetrahydrodipicolinate. In Mannheimia succiniciproducens (strain KCTC 0769BP / MBEL55E), this protein is 4-hydroxy-tetrahydrodipicolinate reductase.